Reading from the N-terminus, the 566-residue chain is Proline--tRNA ligase (566 aa).

It belongs to the class-II aminoacyl-tRNA synthetase family. ProS type 1 subfamily. Homodimer.

The protein localises to the cytoplasm. It carries out the reaction tRNA(Pro) + L-proline + ATP = L-prolyl-tRNA(Pro) + AMP + diphosphate. Functionally, catalyzes the attachment of proline to tRNA(Pro) in a two-step reaction: proline is first activated by ATP to form Pro-AMP and then transferred to the acceptor end of tRNA(Pro). As ProRS can inadvertently accommodate and process non-cognate amino acids such as alanine and cysteine, to avoid such errors it has two additional distinct editing activities against alanine. One activity is designated as 'pretransfer' editing and involves the tRNA(Pro)-independent hydrolysis of activated Ala-AMP. The other activity is designated 'posttransfer' editing and involves deacylation of mischarged Ala-tRNA(Pro). The misacylated Cys-tRNA(Pro) is not edited by ProRS. In Campylobacter concisus (strain 13826), this protein is Proline--tRNA ligase.